Consider the following 77-residue polypeptide: Large ribosomal subunit protein bL28 (77 aa).

It belongs to the bacterial ribosomal protein bL28 family.

This is Large ribosomal subunit protein bL28 from Variovorax paradoxus (strain S110).